The sequence spans 195 residues: MIASIRGIIQSIGIDHLIVETGGVGLLIYAPRSTLNAVGQIGSETFLYTLLIVREDALTLYGFSDPAQRNLFEQLIGVSGVGPKIALNLLSSGSPDEIQKSIAGGDIARLARVPGIGKKTAERIVLELRGKIDLRQLSGTTPGNVSTLDRELTDILISLGYSATEAAAAIAALPGDAPPTLEERLRLALRYFGSA.

The tract at residues 1–64 (MIASIRGIIQ…EDALTLYGFS (64 aa)) is domain I. The tract at residues 65–142 (DPAQRNLFEQ…DLRQLSGTTP (78 aa)) is domain II. Residues 143-151 (GNVSTLDRE) form a flexible linker region. The tract at residues 151 to 195 (ELTDILISLGYSATEAAAAIAALPGDAPPTLEERLRLALRYFGSA) is domain III.

The protein belongs to the RuvA family. In terms of assembly, homotetramer. Forms an RuvA(8)-RuvB(12)-Holliday junction (HJ) complex. HJ DNA is sandwiched between 2 RuvA tetramers; dsDNA enters through RuvA and exits via RuvB. An RuvB hexamer assembles on each DNA strand where it exits the tetramer. Each RuvB hexamer is contacted by two RuvA subunits (via domain III) on 2 adjacent RuvB subunits; this complex drives branch migration. In the full resolvosome a probable DNA-RuvA(4)-RuvB(12)-RuvC(2) complex forms which resolves the HJ.

The protein resides in the cytoplasm. In terms of biological role, the RuvA-RuvB-RuvC complex processes Holliday junction (HJ) DNA during genetic recombination and DNA repair, while the RuvA-RuvB complex plays an important role in the rescue of blocked DNA replication forks via replication fork reversal (RFR). RuvA specifically binds to HJ cruciform DNA, conferring on it an open structure. The RuvB hexamer acts as an ATP-dependent pump, pulling dsDNA into and through the RuvAB complex. HJ branch migration allows RuvC to scan DNA until it finds its consensus sequence, where it cleaves and resolves the cruciform DNA. The polypeptide is Holliday junction branch migration complex subunit RuvA (Chloroflexus aurantiacus (strain ATCC 29364 / DSM 637 / Y-400-fl)).